The sequence spans 478 residues: ATP synthase subunit beta (478 aa).

163 to 170 (GGAGVGKT) is a binding site for ATP.

This sequence belongs to the ATPase alpha/beta chains family. As to quaternary structure, F-type ATPases have 2 components, CF(1) - the catalytic core - and CF(0) - the membrane proton channel. CF(1) has five subunits: alpha(3), beta(3), gamma(1), delta(1), epsilon(1). CF(0) has three main subunits: a(1), b(2) and c(9-12). The alpha and beta chains form an alternating ring which encloses part of the gamma chain. CF(1) is attached to CF(0) by a central stalk formed by the gamma and epsilon chains, while a peripheral stalk is formed by the delta and b chains.

Its subcellular location is the cell inner membrane. The enzyme catalyses ATP + H2O + 4 H(+)(in) = ADP + phosphate + 5 H(+)(out). Produces ATP from ADP in the presence of a proton gradient across the membrane. The catalytic sites are hosted primarily by the beta subunits. The sequence is that of ATP synthase subunit beta from Aquifex pyrophilus.